A 317-amino-acid chain; its full sequence is Transaldolase (317 aa).

Residue Lys-126 is the Schiff-base intermediate with substrate of the active site.

The protein belongs to the transaldolase family. Type 1 subfamily. In terms of assembly, homodimer.

It is found in the cytoplasm. The enzyme catalyses D-sedoheptulose 7-phosphate + D-glyceraldehyde 3-phosphate = D-erythrose 4-phosphate + beta-D-fructose 6-phosphate. Its pathway is carbohydrate degradation; pentose phosphate pathway; D-glyceraldehyde 3-phosphate and beta-D-fructose 6-phosphate from D-ribose 5-phosphate and D-xylulose 5-phosphate (non-oxidative stage): step 2/3. In terms of biological role, transaldolase is important for the balance of metabolites in the pentose-phosphate pathway. The sequence is that of Transaldolase from Burkholderia pseudomallei (strain 1710b).